The sequence spans 307 residues: Small ribosomal subunit protein uS5m (307 aa).

The N-terminal 13 residues, 1-13 (MFKRQLSTSVRYL), are a transit peptide targeting the mitochondrion. The S5 DRBM domain maps to 144 to 208 (LTMKPLVMKR…WDAVRNLKEI (65 aa)).

It belongs to the universal ribosomal protein uS5 family. Component of the mitochondrial small ribosomal subunit (mt-SSU). Mature yeast 74S mitochondrial ribosomes consist of a small (37S) and a large (54S) subunit. The 37S small subunit contains a 15S ribosomal RNA (15S mt-rRNA) and 34 different proteins. The 54S large subunit contains a 21S rRNA (21S mt-rRNA) and 46 different proteins. uS3m, uS4m and uS5m form the narrow entry site of the mRNA channel.

The protein localises to the mitochondrion. In terms of biological role, component of the mitochondrial ribosome (mitoribosome), a dedicated translation machinery responsible for the synthesis of mitochondrial genome-encoded proteins, including at least some of the essential transmembrane subunits of the mitochondrial respiratory chain. The mitoribosomes are attached to the mitochondrial inner membrane and translation products are cotranslationally integrated into the membrane. The chain is Small ribosomal subunit protein uS5m (MRPS5) from Saccharomyces cerevisiae (strain ATCC 204508 / S288c) (Baker's yeast).